Consider the following 274-residue polypeptide: 2,3,4,5-tetrahydropyridine-2,6-dicarboxylate N-succinyltransferase (274 aa).

Arginine 106 and aspartate 143 together coordinate substrate.

This sequence belongs to the transferase hexapeptide repeat family. As to quaternary structure, homotrimer.

It localises to the cytoplasm. The catalysed reaction is (S)-2,3,4,5-tetrahydrodipicolinate + succinyl-CoA + H2O = (S)-2-succinylamino-6-oxoheptanedioate + CoA. The protein operates within amino-acid biosynthesis; L-lysine biosynthesis via DAP pathway; LL-2,6-diaminopimelate from (S)-tetrahydrodipicolinate (succinylase route): step 1/3. This Albidiferax ferrireducens (strain ATCC BAA-621 / DSM 15236 / T118) (Rhodoferax ferrireducens) protein is 2,3,4,5-tetrahydropyridine-2,6-dicarboxylate N-succinyltransferase.